The following is a 150-amino-acid chain: Cyclin-dependent kinases regulatory subunit (150 aa).

Positions 115-137 are enriched in low complexity; the sequence is AAAQQQQQQQQQQQQQQQQHQTQ. A disordered region spans residues 115 to 150; the sequence is AAAQQQQQQQQQQQQQQQQHQTQSISNDMQVPPQIS.

It belongs to the CKS family. In terms of assembly, forms a stable but non-covalent complex with the CDC28 protein and with a cyclin.

Binds to the catalytic subunit of the cyclin dependent kinase (CDC28) and is essential for its biological function. In Saccharomyces cerevisiae (strain ATCC 204508 / S288c) (Baker's yeast), this protein is Cyclin-dependent kinases regulatory subunit.